The sequence spans 605 residues: Elongation factor 4 (605 aa).

One can recognise a tr-type G domain in the interval 11 to 193; it reads KRIRNFSIIA…KVVSNIPSPR (183 aa). GTP is bound by residues 23–28 and 140–143; these read DHGKST and NKID.

It belongs to the TRAFAC class translation factor GTPase superfamily. Classic translation factor GTPase family. LepA subfamily.

Its subcellular location is the cell membrane. It carries out the reaction GTP + H2O = GDP + phosphate + H(+). Functionally, required for accurate and efficient protein synthesis under certain stress conditions. May act as a fidelity factor of the translation reaction, by catalyzing a one-codon backward translocation of tRNAs on improperly translocated ribosomes. Back-translocation proceeds from a post-translocation (POST) complex to a pre-translocation (PRE) complex, thus giving elongation factor G a second chance to translocate the tRNAs correctly. Binds to ribosomes in a GTP-dependent manner. This chain is Elongation factor 4, found in Phytoplasma mali (strain AT).